The sequence spans 404 residues: Probable tRNA sulfurtransferase (404 aa).

A THUMP domain is found at 60-165 (QPVVEALKLV…DEAAYISYEE (106 aa)). Residues 183–184 (ML), 208–209 (HF), arginine 265, glycine 287, and glutamine 296 contribute to the ATP site.

The protein belongs to the ThiI family.

The protein resides in the cytoplasm. The catalysed reaction is [ThiI sulfur-carrier protein]-S-sulfanyl-L-cysteine + a uridine in tRNA + 2 reduced [2Fe-2S]-[ferredoxin] + ATP + H(+) = [ThiI sulfur-carrier protein]-L-cysteine + a 4-thiouridine in tRNA + 2 oxidized [2Fe-2S]-[ferredoxin] + AMP + diphosphate. The enzyme catalyses [ThiS sulfur-carrier protein]-C-terminal Gly-Gly-AMP + S-sulfanyl-L-cysteinyl-[cysteine desulfurase] + AH2 = [ThiS sulfur-carrier protein]-C-terminal-Gly-aminoethanethioate + L-cysteinyl-[cysteine desulfurase] + A + AMP + 2 H(+). It participates in cofactor biosynthesis; thiamine diphosphate biosynthesis. Catalyzes the ATP-dependent transfer of a sulfur to tRNA to produce 4-thiouridine in position 8 of tRNAs, which functions as a near-UV photosensor. Also catalyzes the transfer of sulfur to the sulfur carrier protein ThiS, forming ThiS-thiocarboxylate. This is a step in the synthesis of thiazole, in the thiamine biosynthesis pathway. The sulfur is donated as persulfide by IscS. The sequence is that of Probable tRNA sulfurtransferase from Streptococcus pyogenes serotype M5 (strain Manfredo).